Consider the following 265-residue polypeptide: Hydroxyethylthiazole kinase (265 aa).

Residue Met-44 participates in substrate binding. Lys-120 and Ser-166 together coordinate ATP. Residue Gly-193 coordinates substrate.

The protein belongs to the Thz kinase family. Mg(2+) is required as a cofactor.

The enzyme catalyses 5-(2-hydroxyethyl)-4-methylthiazole + ATP = 4-methyl-5-(2-phosphooxyethyl)-thiazole + ADP + H(+). It participates in cofactor biosynthesis; thiamine diphosphate biosynthesis; 4-methyl-5-(2-phosphoethyl)-thiazole from 5-(2-hydroxyethyl)-4-methylthiazole: step 1/1. Catalyzes the phosphorylation of the hydroxyl group of 4-methyl-5-beta-hydroxyethylthiazole (THZ). This is Hydroxyethylthiazole kinase from Methanosphaerula palustris (strain ATCC BAA-1556 / DSM 19958 / E1-9c).